A 372-amino-acid polypeptide reads, in one-letter code: Chaperone protein DnaJ (372 aa).

The region spanning 3-68 is the J domain; sequence NLYEILEVNE…EKRKKYDMYG (66 aa). The CR-type zinc-finger motif lies at 130–212; it reads GTKKEISYKK…CKGKGYEIER (83 aa). Zn(2+) is bound by residues Cys-143, Cys-146, Cys-160, Cys-163, Cys-186, Cys-189, Cys-200, and Cys-203. CXXCXGXG motif repeat units follow at residues 143–150, 160–167, 186–193, and 200–207; these read CHVCNGDG, CEKCHGTG, CDKCHGEG, and CENCKGKG.

It belongs to the DnaJ family. As to quaternary structure, homodimer. Zn(2+) is required as a cofactor.

It localises to the cytoplasm. Participates actively in the response to hyperosmotic and heat shock by preventing the aggregation of stress-denatured proteins and by disaggregating proteins, also in an autonomous, DnaK-independent fashion. Unfolded proteins bind initially to DnaJ; upon interaction with the DnaJ-bound protein, DnaK hydrolyzes its bound ATP, resulting in the formation of a stable complex. GrpE releases ADP from DnaK; ATP binding to DnaK triggers the release of the substrate protein, thus completing the reaction cycle. Several rounds of ATP-dependent interactions between DnaJ, DnaK and GrpE are required for fully efficient folding. Also involved, together with DnaK and GrpE, in the DNA replication of plasmids through activation of initiation proteins. In Finegoldia magna (strain ATCC 29328 / DSM 20472 / WAL 2508) (Peptostreptococcus magnus), this protein is Chaperone protein DnaJ.